Here is a 444-residue protein sequence, read N- to C-terminus: Adenylosuccinate synthetase (444 aa).

GTP contacts are provided by residues 19–25 (GDEGKGK) and 47–49 (GHT). The Proton acceptor role is filled by Asp20. Mg(2+) contacts are provided by Asp20 and Gly47. IMP is bound by residues 20–23 (DEGK), 45–48 (NAGH), Thr139, Arg153, Gln234, Thr249, and Arg317. The Proton donor role is filled by His48. 313–319 (TVTGRPR) contributes to the substrate binding site. Residues Arg319, 345–347 (KLD), and 427–429 (STG) contribute to the GTP site.

The protein belongs to the adenylosuccinate synthetase family. Homodimer. Mg(2+) serves as cofactor.

It is found in the cytoplasm. It carries out the reaction IMP + L-aspartate + GTP = N(6)-(1,2-dicarboxyethyl)-AMP + GDP + phosphate + 2 H(+). Its pathway is purine metabolism; AMP biosynthesis via de novo pathway; AMP from IMP: step 1/2. Its function is as follows. Plays an important role in the de novo pathway of purine nucleotide biosynthesis. Catalyzes the first committed step in the biosynthesis of AMP from IMP. The polypeptide is Adenylosuccinate synthetase (Methylibium petroleiphilum (strain ATCC BAA-1232 / LMG 22953 / PM1)).